A 646-amino-acid chain; its full sequence is ATP-dependent zinc metalloprotease FtsH (646 aa).

Residues 1–4 lie on the Cytoplasmic side of the membrane; the sequence is MTRS. The chain crosses the membrane as a helical span at residues 5 to 25; that stretch reads LLWQMVIVLGAILMVNYVLTT. Residues 26 to 120 are Periplasmic-facing; sequence LTPQTQEPVV…VRPESKPSPW (95 aa). Residues 121–141 traverse the membrane as a helical segment; the sequence is ATAMIYMLPWLLIVGVWWFVI. Residues 142–646 lie on the Cytoplasmic side of the membrane; it reads KGMRTRQGPG…GELAGGAVEG (505 aa). An ATP-binding site is contributed by 216 to 223; it reads GPPGTGKT. Residue His-437 coordinates Zn(2+). Glu-438 is a catalytic residue. The Zn(2+) site is built by His-441 and Asp-513.

The protein in the central section; belongs to the AAA ATPase family. This sequence in the C-terminal section; belongs to the peptidase M41 family. As to quaternary structure, homohexamer. The cofactor is Zn(2+).

The protein resides in the cell inner membrane. Acts as a processive, ATP-dependent zinc metallopeptidase for both cytoplasmic and membrane proteins. Plays a role in the quality control of integral membrane proteins. This chain is ATP-dependent zinc metalloprotease FtsH, found in Syntrophotalea carbinolica (strain DSM 2380 / NBRC 103641 / GraBd1) (Pelobacter carbinolicus).